A 2559-amino-acid chain; its full sequence is Stabilin-2 (2559 aa).

Positions 1–28 are cleaved as a signal peptide; the sequence is MARSKLLLGKLLPLILIFLGLLVQNACS. Over 29-2464 the chain is Extracellular; it reads PTEAPELTKR…PPTAATAAHS (2436 aa). The N-linked (GlcNAc...) asparagine glycan is linked to N71. EGF-like domains lie at 116-156, 164-201, 203-244, 245-284, and 330-370; these read DCME…TACE, FGPN…PRCD, PIPE…QTCK, PINP…QVCL, and MTDI…LNCY. 3 disulfide bridges follow: C120–C134, C128–C144, and C146–C155. N167 carries N-linked (GlcNAc...) asparagine glycosylation. 12 disulfide bridges follow: C168–C179, C172–C189, C191–C200, C207–C218, C212–C230, C232–C243, C249–C260, C254–C270, C272–C283, C334–C346, C340–C356, and C358–C369. N-linked (GlcNAc...) asparagine glycosylation occurs at N345. 2 FAS1 domains span residues 379–512 and 522–659; these read ELNT…DRAM and NPQQ…TGVL. N-linked (GlcNAc...) asparagine glycosylation is found at N572, N626, N673, and N691. The region spanning 743-783 is the EGF-like 6 domain; the sequence is DCNPCPGGFMNPCSGNGQCIDGLGGNGTCICEDGFQGSRCQ. 3 disulfide bridges follow: C747-C761, C755-C771, and C773-C782. N-linked (GlcNAc...) asparagine glycosylation occurs at N768. N-linked (GlcNAc...) asparagine glycosylation occurs at N796. EGF-like domains are found at residues 833 to 873, 874 to 917, 918 to 960, and 961 to 1002; these read QTSA…TLCS, KKDP…RDCV, EINS…IDCE, and PIIS…VLCY. Disulfide bonds link C837–C850, C844–C859, C861–C872, C878–C893, C887–C903, C905–C916, C922–C936, C930–C946, C948–C959, C965–C978, C972–C988, and C990–C1001. A glycan (N-linked (GlcNAc...) asparagine) is linked at N854. A glycan (N-linked (GlcNAc...) asparagine) is linked at N933. 2 consecutive FAS1 domains span residues 1002–1135 and 1145–1273; these read YGNV…NKVL and LPSL…EKVL. N-linked (GlcNAc...) asparagine glycans are attached at residues N1024, N1036, N1108, N1255, and N1283. A Laminin EGF-like 1 domain is found at 1350-1415; the sequence is PQCQACPGKG…CSCVHGRCNQ (66 aa). 18 disulfides stabilise this stretch: C1355-C1369, C1363-C1379, C1381-C1390, C1402-C1413, C1406-C1423, C1425-C1434, C1443-C1453, C1447-C1463, C1465-C1476, C1482-C1495, C1489-C1505, C1507-C1518, C1524-C1537, C1531-C1547, C1549-C1560, C1566-C1579, C1573-C1589, and C1591-C1602. N-linked (GlcNAc...) asparagine glycans are attached at residues N1374 and N1386. EGF-like domains are found at residues 1439-1477, 1478-1519, 1520-1561, and 1562-1603; these read TTDN…TVCT, AINA…IVCL, EINP…KVCT, and LINV…IVCR. N-linked (GlcNAc...) asparagine glycosylation is present at N1444. N1472 is a glycosylation site (N-linked (GlcNAc...) asparagine). N1580 carries an N-linked (GlcNAc...) asparagine glycan. FAS1 domains are found at residues 1603-1731 and 1747-1888; these read RGSI…DTLL and VLLN…DCLL. A glycan (N-linked (GlcNAc...) asparagine) is linked at N1750. The region spanning 1965 to 2030 is the Laminin EGF-like 2 domain; it reads PDCQACPGGP…GCSEHGQCDE (66 aa). Intrachain disulfides connect C1970-C1984, C1978-C1994, C1996-C2005, C2017-C2028, C2022-C2038, C2040-C2049, C2059-C2069, C2063-C2075, C2077-C2088, C2094-C2107, C2101-C2116, C2118-C2129, C2135-C2149, C2143-C2159, C2161-C2172, C2228-C2296, and C2252-C2273. A glycan (N-linked (GlcNAc...) asparagine) is linked at N2001. EGF-like domains are found at residues 2055–2089, 2090–2130, and 2131–2173; these read VIPV…ITCT, VVDF…HSCT, and EIDP…RDCE. N-linked (GlcNAc...) asparagine glycosylation is present at N2072. Positions 2206-2298 constitute a Link domain; it reads GVFHLRSPLG…SEMWDVFCYR (93 aa). N-linked (GlcNAc...) asparagine glycosylation is found at N2287, N2303, N2375, N2391, and N2400. An FAS1 7 domain is found at 2318-2452; the sequence is NGNLLQVLMS…GVLHIISEPL (135 aa). A helical transmembrane segment spans residues 2465–2485; the sequence is GLGTGIFCAVVLVTGAIALAA. The Cytoplasmic portion of the chain corresponds to 2486–2559; the sequence is YSYFRLNQRT…NSDPLGALRS (74 aa). The residue at position 2503 (S2503) is a Phosphoserine. Positions 2510–2520 are interaction with TMSB4X; the sequence is LAFGKQQPESI. The segment at 2514-2559 is disordered; it reads KQQPESITNPLYETSTPAAPEPSCDPFTDSGERELENSDPLGALRS. Polar residues predominate over residues 2516–2530; it reads QPESITNPLYETSTP.

As to quaternary structure, interacts with heparin, alpha-M/beta-2 integrin (ITGAM and ITGB2), and thymosin beta 4 (TMSB4X). Interacts with GULP1. Associates with clathrin and adapter protein AP-2; in liver sinusoidal endothelial cells (LSECs). Glycosylated. In terms of processing, proteolytically processed to yield a smaller protein. In terms of tissue distribution, expressed in endothelial sinuses of liver, lymph nodes, bone marrow, spleen and in specialised structures of eye, heart, brain and kidney. Expression is detected in corneal and lens epithelium, in mesenchymal cells of the heart valves, in the ependymal cells lining the ventricles in the brain, and in the prismatic epithelial cells covering the renal papillae.

It is found in the cytoplasm. It localises to the cell membrane. In terms of biological role, phosphatidylserine receptor that enhances the engulfment of apoptotic cells. Hyaluronan receptor that binds to and mediates endocytosis of hyaluronic acid (HA). Also acts, in different species, as a primary systemic scavenger receptor for heparin (Hep), chondroitin sulfate (CS), dermatan sulfate (DS), nonglycosaminoglycan (GAG), acetylated low-density lipoprotein (AcLDL), pro-collagen propeptides and advanced glycation end products (AGE). May serve to maintain tissue integrity by supporting extracellular matrix turnover or it may contribute to maintaining fluidity of bodily liquids by resorption of hyaluronan. Counter receptor which plays an important role in lymphocyte recruitment in the hepatic vasculature. Binds to both Gram-positive and Gram-negative bacteria and may play a role in defense against bacterial infection. The proteolytically processed short form also functions as an endocytosis receptor for heparin internalization as well as HA and CS. The sequence is that of Stabilin-2 from Mus musculus (Mouse).